The chain runs to 505 residues: 4-alpha-glucanotransferase (505 aa).

The protein belongs to the disproportionating enzyme family.

It localises to the cytoplasm. It catalyses the reaction Transfers a segment of a (1-&gt;4)-alpha-D-glucan to a new position in an acceptor, which may be glucose or a (1-&gt;4)-alpha-D-glucan.. The polypeptide is 4-alpha-glucanotransferase (malQ) (Synechocystis sp. (strain ATCC 27184 / PCC 6803 / Kazusa)).